Here is a 252-residue protein sequence, read N- to C-terminus: Triosephosphate isomerase (252 aa).

A substrate-binding site is contributed by 10–12 (NWK). The active-site Electrophile is His96. The active-site Proton acceptor is Glu168. Residues Gly174, Ser214, and 235-236 (GG) contribute to the substrate site.

This sequence belongs to the triosephosphate isomerase family. Homodimer.

The protein localises to the cytoplasm. It catalyses the reaction D-glyceraldehyde 3-phosphate = dihydroxyacetone phosphate. Its pathway is carbohydrate biosynthesis; gluconeogenesis. The protein operates within carbohydrate degradation; glycolysis; D-glyceraldehyde 3-phosphate from glycerone phosphate: step 1/1. Involved in the gluconeogenesis. Catalyzes stereospecifically the conversion of dihydroxyacetone phosphate (DHAP) to D-glyceraldehyde-3-phosphate (G3P). The protein is Triosephosphate isomerase of Streptococcus pyogenes serotype M18 (strain MGAS8232).